The primary structure comprises 266 residues: Elongator complex protein 6 (266 aa).

It belongs to the ELP6 family. Component of the elongator complex which consists of ELP1, ELP2, ELP3, ELP4, ELP5 and ELP6.

The protein localises to the cytoplasm. It localises to the nucleus. Its pathway is tRNA modification; 5-methoxycarbonylmethyl-2-thiouridine-tRNA biosynthesis. Component of the elongator complex which is required for multiple tRNA modifications, including mcm5U (5-methoxycarbonylmethyl uridine), mcm5s2U (5-methoxycarbonylmethyl-2-thiouridine), and ncm5U (5-carbamoylmethyl uridine). The elongator complex catalyzes formation of carboxymethyluridine in the wobble base at position 34 in tRNAs. Involved in cell migration. This chain is Elongator complex protein 6, found in Homo sapiens (Human).